A 548-amino-acid polypeptide reads, in one-letter code: Cilia- and flagella-associated protein 97 (548 aa).

S8 and S19 each carry phosphoserine. 3 disordered regions span residues 85-297 (NYLT…RQEN), 407-431 (LSRQAEKPGNKSTIPGRSLGHPPKL), and 497-548 (YSPL…LRSH). Residues 91–107 (GNERKPKFPSKEQHVEN) show a composition bias toward basic and acidic residues. Residues 112-121 (TRSPSLLTSS) are compositionally biased toward low complexity. Residues 152-161 (DYYTDGEESS) show a composition bias toward acidic residues. At T155 the chain carries Phosphothreonine. S160 and S161 each carry phosphoserine. Residues 191–209 (KASSSSLSSSSSRSSSDCS) show a composition bias toward low complexity. Residues 214-237 (DMQNKPDSGSSGKRVSSVTPSSPK) are compositionally biased toward polar residues. S235 bears the Phosphoserine mark. Residues 238-248 (QKCKSGRKSSA) show a composition bias toward basic residues. Phosphoserine is present on S259. The span at 264 to 289 (TDVTPASTPDSSPAQPFELSQSQNQK) shows a compositional bias: polar residues. Residues 383–460 (RKNYSFTREE…ALLKRLEAVK (78 aa)) adopt a coiled-coil conformation. Polar residues-rich tracts occupy residues 504–514 (SRTSSATSGLS) and 537–548 (IQCSNSKVLRSH).

It belongs to the CFAP97 family.

The protein is Cilia- and flagella-associated protein 97 of Rattus norvegicus (Rat).